Here is a 510-residue protein sequence, read N- to C-terminus: NAD(P)H-quinone oxidoreductase subunit 2 A, chloroplastic (510 aa).

Helical transmembrane passes span 31–51, 59–79, 99–119, 124–144, 149–169, 184–204, 229–249, 261–281, 295–315, 323–343, 354–374, 395–415, 418–438, and 484–504; these read FIFP…IDLT, WFYF…LFRW, IFQF…VEYI, MAIT…MFLC, LITI…LSGY, LLMG…LYGL, ISIA…LAPF, PTPV…ALAT, WHLL…LLAI, MLAY…IVGD, YMLF…LFGL, ALSL…AGFF, LYLF…IGLL, and MTVC…ILAI.

Belongs to the complex I subunit 2 family. In terms of assembly, NDH is composed of at least 16 different subunits, 5 of which are encoded in the nucleus.

Its subcellular location is the plastid. It is found in the chloroplast thylakoid membrane. The enzyme catalyses a plastoquinone + NADH + (n+1) H(+)(in) = a plastoquinol + NAD(+) + n H(+)(out). It carries out the reaction a plastoquinone + NADPH + (n+1) H(+)(in) = a plastoquinol + NADP(+) + n H(+)(out). In terms of biological role, NDH shuttles electrons from NAD(P)H:plastoquinone, via FMN and iron-sulfur (Fe-S) centers, to quinones in the photosynthetic chain and possibly in a chloroplast respiratory chain. The immediate electron acceptor for the enzyme in this species is believed to be plastoquinone. Couples the redox reaction to proton translocation, and thus conserves the redox energy in a proton gradient. In Oryza sativa subsp. japonica (Rice), this protein is NAD(P)H-quinone oxidoreductase subunit 2 A, chloroplastic.